Reading from the N-terminus, the 215-residue chain is Adenylate kinase (215 aa).

Position 10–15 (10–15 (GAGKGT)) interacts with ATP. The tract at residues 30 to 59 (STGDMLRAAVKAGSPLGQQVKGVMDSGGLV) is NMP. Residues Thr-31, Arg-36, 57–59 (GLV), 85–88 (GFPR), and Gln-92 each bind AMP. The LID stretch occupies residues 122–159 (GRRVHPASGRVYHTEHNPPKVAGKDDVTGEDLIQREDD). ATP contacts are provided by residues Arg-123 and 132–133 (VY). Residues Arg-156 and Arg-167 each contribute to the AMP site. Residue Gly-201 coordinates ATP.

It belongs to the adenylate kinase family. As to quaternary structure, monomer.

The protein localises to the cytoplasm. It catalyses the reaction AMP + ATP = 2 ADP. It functions in the pathway purine metabolism; AMP biosynthesis via salvage pathway; AMP from ADP: step 1/1. Catalyzes the reversible transfer of the terminal phosphate group between ATP and AMP. Plays an important role in cellular energy homeostasis and in adenine nucleotide metabolism. In Pseudomonas paraeruginosa (strain DSM 24068 / PA7) (Pseudomonas aeruginosa (strain PA7)), this protein is Adenylate kinase.